We begin with the raw amino-acid sequence, 167 residues long: Respiratory supercomplex factor 1-A, mitochondrial (167 aa).

Residues 1–86 (MCSDFEEETS…TERKQRREFE (86 aa)) enclose the HIG1 domain. Helical transmembrane passes span 21-38 (EPLIPLGCAATCYALYRA) and 53-75 (MFRARIYAQFFTLLAVVAGGMYY). Residues 75-107 (YKTERKQRREFEKKVEERKAQEKRDAWLRELEA) adopt a coiled-coil conformation.

Belongs to the RCF1 family. As to quaternary structure, associates with the respiratory chain complex III/complex IV supercomplex.

It localises to the mitochondrion membrane. Its function is as follows. Cytochrome c oxidase subunit which plays a role in assembly of respiratory supercomplexes. This is Respiratory supercomplex factor 1-A, mitochondrial (rcf1-A) from Talaromyces marneffei (strain ATCC 18224 / CBS 334.59 / QM 7333) (Penicillium marneffei).